Consider the following 150-residue polypeptide: MNVILLDKIANLGSLGDQVSVKAGYARNFLLPFGKAVVANAANVEVFEARRAELEAKLAAELATATARAEKLAALEAVVIASKAGDEGKLFGSIGNRDIADAVTAAGVELAKSEVRLPLGALRTTGNFEVEVQVHTEVKAVVKVTVVAEA.

Belongs to the bacterial ribosomal protein bL9 family.

Functionally, binds to the 23S rRNA. This is Large ribosomal subunit protein bL9 from Shewanella denitrificans (strain OS217 / ATCC BAA-1090 / DSM 15013).